The chain runs to 195 residues: MSEIKLIVGLANPGAEYVQTRHNAGAWYVEELARICGVSLVADSKYFGLTARAVLHGKDVRLLIPTTYMNLSGKAVGALANFFRITPEEILVAHDELDMPPGVAKFKLGGGHGGHNGLKDIIAKLANDKNFYRLRIGIGHPGDKNKVSGYVLGKAPAKEQELINAAVDEAVRSTEILFKEDMVKAMTRLHSFKAE.

Residue Tyr-17 participates in tRNA binding. The active-site Proton acceptor is the His-22. Tyr-68, Asn-70, and Asn-116 together coordinate tRNA.

The protein belongs to the PTH family. As to quaternary structure, monomer.

The protein localises to the cytoplasm. The catalysed reaction is an N-acyl-L-alpha-aminoacyl-tRNA + H2O = an N-acyl-L-amino acid + a tRNA + H(+). Hydrolyzes ribosome-free peptidyl-tRNAs (with 1 or more amino acids incorporated), which drop off the ribosome during protein synthesis, or as a result of ribosome stalling. Functionally, catalyzes the release of premature peptidyl moieties from peptidyl-tRNA molecules trapped in stalled 50S ribosomal subunits, and thus maintains levels of free tRNAs and 50S ribosomes. In Shewanella oneidensis (strain ATCC 700550 / JCM 31522 / CIP 106686 / LMG 19005 / NCIMB 14063 / MR-1), this protein is Peptidyl-tRNA hydrolase.